A 101-amino-acid polypeptide reads, in one-letter code: Biogenesis of lysosome-related organelles complex 1 subunit BLS1 (101 aa).

Belongs to the BLOC1S1 family. In terms of assembly, component of the biogenesis of lysosome-related organelles complex-1 (BLOC-1).

The protein resides in the endosome. Component of the biogenesis of lysosome-related organelles complex-1 (BLOC-1), a complex involved in endosomal cargo sorting. The chain is Biogenesis of lysosome-related organelles complex 1 subunit BLS1 (BLS1) from Zygosaccharomyces rouxii (strain ATCC 2623 / CBS 732 / NBRC 1130 / NCYC 568 / NRRL Y-229).